We begin with the raw amino-acid sequence, 374 residues long: Phospho-N-acetylmuramoyl-pentapeptide-transferase (374 aa).

10 consecutive transmembrane segments (helical) span residues A3–I23, M52–L72, P85–I105, L125–T145, I170–A190, L201–F221, P244–W264, I271–S291, T294–I314, and F350–L370.

Belongs to the glycosyltransferase 4 family. MraY subfamily. Requires Mg(2+) as cofactor.

Its subcellular location is the cell membrane. The catalysed reaction is UDP-N-acetyl-alpha-D-muramoyl-L-alanyl-gamma-D-glutamyl-meso-2,6-diaminopimeloyl-D-alanyl-D-alanine + di-trans,octa-cis-undecaprenyl phosphate = di-trans,octa-cis-undecaprenyl diphospho-N-acetyl-alpha-D-muramoyl-L-alanyl-D-glutamyl-meso-2,6-diaminopimeloyl-D-alanyl-D-alanine + UMP. The protein operates within cell wall biogenesis; peptidoglycan biosynthesis. Catalyzes the initial step of the lipid cycle reactions in the biosynthesis of the cell wall peptidoglycan: transfers peptidoglycan precursor phospho-MurNAc-pentapeptide from UDP-MurNAc-pentapeptide onto the lipid carrier undecaprenyl phosphate, yielding undecaprenyl-pyrophosphoryl-MurNAc-pentapeptide, known as lipid I. This chain is Phospho-N-acetylmuramoyl-pentapeptide-transferase, found in Salinispora arenicola (strain CNS-205).